The primary structure comprises 291 residues: DegV domain-containing protein CPE0026 (291 aa).

Residues 4 to 286 (FVIFTDSAAD…IGTLAVFFLG (283 aa)) enclose the DegV domain. 2 residues coordinate hexadecanoate: threonine 63 and serine 95.

May bind long-chain fatty acids, such as palmitate, and may play a role in lipid transport or fatty acid metabolism. The sequence is that of DegV domain-containing protein CPE0026 from Clostridium perfringens (strain 13 / Type A).